The following is a 191-amino-acid chain: Uridylate kinase (191 aa).

12–17 (GAGKGT) serves as a coordination point for ATP. Positions 33 to 63 (SAGDCLREEQNRPGSKYGNLIKEYIKDGKIV) are NMP. A ribonucleoside 5'-phosphate-binding positions include R39, 61-63 (KIV), 91-94 (GFPR), and Q98. The LID stretch occupies residues 128–138 (HRGKTSGRSDD). An ATP-binding site is contributed by R129. 2 residues coordinate a ribonucleoside 5'-phosphate: R135 and R146. Residue Q174 participates in ATP binding.

This sequence belongs to the adenylate kinase family. UMP-CMP kinase subfamily. In terms of assembly, monomer. The cofactor is Mg(2+).

It is found in the cytoplasm. Its subcellular location is the nucleus. It catalyses the reaction UMP + ATP = UDP + ADP. Catalyzes the phosphorylation of pyrimidine nucleoside monophosphates at the expense of ATP. Plays an important role in de novo pyrimidine nucleotide biosynthesis. Has preference for UMP and dUMP as phosphate acceptors, but can also use CMP, dCMP and AMP. The protein is Uridylate kinase of Schizosaccharomyces pombe (strain 972 / ATCC 24843) (Fission yeast).